A 152-amino-acid chain; its full sequence is Ribosomal RNA large subunit methyltransferase H (152 aa).

Residues leucine 65, glycine 96, and 115–120 each bind S-adenosyl-L-methionine; that span reads LGPMTW.

Belongs to the RNA methyltransferase RlmH family. As to quaternary structure, homodimer.

It is found in the cytoplasm. The enzyme catalyses pseudouridine(1915) in 23S rRNA + S-adenosyl-L-methionine = N(3)-methylpseudouridine(1915) in 23S rRNA + S-adenosyl-L-homocysteine + H(+). In terms of biological role, specifically methylates the pseudouridine at position 1915 (m3Psi1915) in 23S rRNA. In Gluconacetobacter diazotrophicus (strain ATCC 49037 / DSM 5601 / CCUG 37298 / CIP 103539 / LMG 7603 / PAl5), this protein is Ribosomal RNA large subunit methyltransferase H.